Here is a 165-residue protein sequence, read N- to C-terminus: Chorismate pyruvate-lyase (165 aa).

4 residues coordinate substrate: Met35, Arg77, Leu115, and Glu156.

The protein belongs to the UbiC family. As to quaternary structure, monomer.

Its subcellular location is the cytoplasm. The catalysed reaction is chorismate = 4-hydroxybenzoate + pyruvate. Its pathway is cofactor biosynthesis; ubiquinone biosynthesis. Removes the pyruvyl group from chorismate, with concomitant aromatization of the ring, to provide 4-hydroxybenzoate (4HB) for the ubiquinone pathway. The chain is Chorismate pyruvate-lyase from Escherichia coli O7:K1 (strain IAI39 / ExPEC).